The chain runs to 342 residues: Alpha-(1,3)-fucosyltransferase 7 (342 aa).

Over 1 to 11 (MQNAGLSPTPS) the chain is Cytoplasmic. Residues 12-31 (LRALGGLAMAALLSTVWLWW) traverse the membrane as a helical; Signal-anchor for type II membrane protein segment. Residues 32-342 (RLGAAPGGAP…YQDLEGWFQA (311 aa)) are Extracellular-facing. Cys68 and Cys76 are oxidised to a cystine. Residue Asn81 is glycosylated (N-linked (GlcNAc...) asparagine). Cys211 and Cys214 form a disulfide bridge. An N-linked (GlcNAc...) asparagine glycan is attached at Asn291. A disulfide bond links Cys318 and Cys321.

It belongs to the glycosyltransferase 10 family. Post-translationally, N-glycosylated. In terms of tissue distribution, expressed in thymus, spleen, liver and lung. Highly expressed in the thymus and lower expressed in the lung.

It localises to the membrane. It catalyses the reaction an N-acetyl-alpha-neuraminyl-(2-&gt;3)-beta-D-galactosyl-(1-&gt;4)-N-acetyl-beta-D-glucosaminyl derivative + GDP-beta-L-fucose = an alpha-Neu5Ac-(2-&gt;3)-beta-D-Gal-(1-&gt;4)-[alpha-L-Fuc-(1-&gt;3)]-beta-D-GlcNAc derivative + GDP + H(+). The catalysed reaction is a neolactoside IV(3)-alpha-NeuAc-nLc4Cer + GDP-beta-L-fucose = a neolactoside IV(3)-alpha-NeuNAc,III(3)-alpha-Fuc-nLc4Cer + GDP + H(+). It carries out the reaction a neolactoside VI(3)-alpha-NeuNAc-nLc6Cer + GDP-beta-L-fucose = a neolactoside VI(3)-alpha-NeuAc,V(3)-alphaFuc-nLc6Cer + GDP + H(+). The enzyme catalyses an alpha-Neu5Ac-(2-&gt;3)-beta-D-Gal-(1-&gt;4)-beta-D-GlcNAc-(1-&gt;3)-beta-D-Gal-(1-&gt;4)-[alpha-L-Fuc-(1-&gt;3)]-beta-D-GlcNAc derivative + GDP-beta-L-fucose = an alpha-Neu5Ac-(2-&gt;3)-beta-D-Gal-(1-&gt;4)-[alpha-L-Fuc-(1-&gt;3)]-beta-D-GlcNAc-(1-&gt;3)-beta-D-Gal-(1-&gt;4)-[alpha-L-Fuc-(1-&gt;3)]-beta-D-GlcNAc derivative + GDP + H(+). It catalyses the reaction an alpha-Neu5Ac-(2-&gt;3)-beta-D-Gal-(1-&gt;4)-beta-D-GlcNAc6S derivative + GDP-beta-L-fucose = an alpha-Neu5Ac-(2-&gt;3)-beta-D-Gal-(1-&gt;4)-[alpha-L-Fuc-(1-&gt;3)]-beta-D-GlcNAc6S derivative + GDP + H(+). The catalysed reaction is alpha-Neu5Ac-(2-&gt;3)-beta-D-Gal-(1-&gt;4)-beta-D-GlcNAc-(1-&gt;3)-beta-D-Gal-(1-&gt;4)-D-Glc + GDP-beta-L-fucose = alpha-Neu5Ac-(2-&gt;3)-beta-D-Gal-(1-&gt;4)-[alpha-L-Fuc-(1-&gt;3)]-beta-D-GlcNAc-(1-&gt;3)-beta-D-Gal-(1-&gt;4)-D-Glc + GDP + H(+). It carries out the reaction alpha-Neu5Ac-(2-&gt;3)-beta-D-Gal-(1-&gt;4)-beta-D-GlcNAc-(1-&gt;3)-beta-D-Gal-(1-&gt;4)-[alpha-L-Fuc-(1-&gt;3)]-beta-D-GlcNAc-(1-&gt;3)-beta-D-Gal-(1-&gt;4)-beta-D-GlcNAc + GDP-beta-L-fucose = alpha-Neu5Ac-(2-&gt;3)-beta-D-Gal-(1-&gt;4)-[alpha-L-Fuc-(1-&gt;3)]-beta-D-GlcNAc-(1-&gt;3)-beta-D-Gal-(1-&gt;4)-[alpha-L-Fuc-(1-&gt;3)]-beta-D-GlcNAc-(1-&gt;3)-beta-D-Gal-(1-&gt;4)-beta-D-GlcNAc + GDP + H(+). The enzyme catalyses alpha-Neu5Ac-(2-&gt;3)-beta-D-Gal-(1-&gt;4)-beta-D-GlcNAc-(1-&gt;3)-beta-D-Gal-(1-&gt;4)-beta-D-GlcNAc-(1-&gt;3)-beta-D-Gal-(1-&gt;4)-beta-D-GlcNAc + GDP-beta-L-fucose = alpha-Neu5Ac-(2-&gt;3)-beta-D-Gal-(1-&gt;4)-[alpha-L-Fuc-(1-&gt;3)]-beta-D-GlcNAc-(1-&gt;3)-beta-D-Gal-(1-&gt;4)-beta-D-GlcNAc-(1-&gt;3)-beta-D-Gal-(1-&gt;4)-beta-D-GlcNAc + GDP + H(+). Its pathway is protein modification; protein glycosylation. Its activity is regulated as follows. Inhibited by NaCl. Inhibited by GDP in a concentration dependent manner, with an IC(50) value of 93 uM. Also inhibited by GMP and GTP. Inhibited by N-ethylmaleimide. Activated by poly(ethylene glycol) by enhancing the thermal stability of FUT7. Activated by Mn2+, Ca2+, and Mg2+. Both panosialin A and B inhibit activity with IC(50) values of 4.8 and 5.3 ug/ml, respectively. Inhibited by gallic acid (GA) and (-)-epigallocatechin gallate (EGCG) in a time-dependent and irreversible manner with IC(50) values of 60 and 700 nM, respectively. Functionally, catalyzes the transfer of L-fucose, from a guanosine diphosphate-beta-L-fucose, to the N-acetyl glucosamine (GlcNAc) of a distal alpha2,3 sialylated lactosamine unit of a glycoprotein or a glycolipid-linked sialopolylactosamines chain through an alpha-1,3 glycosidic linkage and participates in the final fucosylation step in the biosynthesis of the sialyl Lewis X (sLe(x)), a carbohydrate involved in cell and matrix adhesion during leukocyte trafficking and fertilization. In vitro, also synthesizes sialyl-dimeric-Lex structures, from VIM-2 structures and both di-fucosylated and trifucosylated structures from mono-fucosylated precursors. However does not catalyze alpha 1-3 fucosylation when an internal alpha 1-3 fucosylation is present in polylactosamine chain and the fucosylation rate of the internal GlcNAc residues is reduced once fucose has been added to the distal GlcNAc. Also catalyzes the transfer of a fucose from GDP-beta-fucose to the 6-sulfated a(2,3)sialylated substrate to produce 6-sulfo sLex mediating significant L-selectin-dependent cell adhesion. Through sialyl-Lewis(x) biosynthesis, can control SELE- and SELP-mediated cell adhesion with leukocytes and allows leukocytes tethering and rolling along the endothelial tissue thereby enabling the leukocytes to accumulate at a site of inflammation. May enhance embryo implantation through sialyl Lewis X (sLeX)-mediated adhesion of embryo cells to endometrium. May affect insulin signaling by up-regulating the phosphorylation and expression of some signaling molecules involved in the insulin-signaling pathway through SLe(x) which is present on the glycans of the INSRR alpha subunit. The polypeptide is Alpha-(1,3)-fucosyltransferase 7 (Bos taurus (Bovine)).